A 128-amino-acid chain; its full sequence is Large ribosomal subunit protein bL17 (128 aa).

Belongs to the bacterial ribosomal protein bL17 family. In terms of assembly, part of the 50S ribosomal subunit. Contacts protein L32.

The chain is Large ribosomal subunit protein bL17 from Streptococcus pneumoniae serotype 4 (strain ATCC BAA-334 / TIGR4).